A 156-amino-acid polypeptide reads, in one-letter code: Putative pre-16S rRNA nuclease (156 aa).

The protein belongs to the YqgF nuclease family.

The protein localises to the cytoplasm. Its function is as follows. Could be a nuclease involved in processing of the 5'-end of pre-16S rRNA. The sequence is that of Putative pre-16S rRNA nuclease from Ehrlichia canis (strain Jake).